A 428-amino-acid polypeptide reads, in one-letter code: Histidinol dehydrogenase (428 aa).

3 residues coordinate NAD(+): tyrosine 125, glutamine 187, and asparagine 210. Substrate-binding residues include serine 234, glutamine 256, and histidine 259. Zn(2+) contacts are provided by glutamine 256 and histidine 259. Catalysis depends on proton acceptor residues glutamate 323 and histidine 324. Substrate contacts are provided by histidine 324, aspartate 357, glutamate 411, and histidine 416. Aspartate 357 is a Zn(2+) binding site. Histidine 416 is a binding site for Zn(2+).

This sequence belongs to the histidinol dehydrogenase family. Requires Zn(2+) as cofactor.

It catalyses the reaction L-histidinol + 2 NAD(+) + H2O = L-histidine + 2 NADH + 3 H(+). The protein operates within amino-acid biosynthesis; L-histidine biosynthesis; L-histidine from 5-phospho-alpha-D-ribose 1-diphosphate: step 9/9. Catalyzes the sequential NAD-dependent oxidations of L-histidinol to L-histidinaldehyde and then to L-histidine. This chain is Histidinol dehydrogenase, found in Bacteroides thetaiotaomicron (strain ATCC 29148 / DSM 2079 / JCM 5827 / CCUG 10774 / NCTC 10582 / VPI-5482 / E50).